We begin with the raw amino-acid sequence, 159 residues long: Probable inactive acireductone dioxygenase 1 (159 aa).

This sequence belongs to the acireductone dioxygenase (ARD) family.

The protein localises to the cytoplasm. Its subcellular location is the nucleus. Probable inactive acireductone dioxygenase. The protein is Probable inactive acireductone dioxygenase 1 of Caenorhabditis elegans.